A 291-amino-acid polypeptide reads, in one-letter code: Glycine--tRNA ligase alpha subunit (291 aa).

Belongs to the class-II aminoacyl-tRNA synthetase family. As to quaternary structure, tetramer of two alpha and two beta subunits.

The protein localises to the cytoplasm. It catalyses the reaction tRNA(Gly) + glycine + ATP = glycyl-tRNA(Gly) + AMP + diphosphate. The protein is Glycine--tRNA ligase alpha subunit of Nitratidesulfovibrio vulgaris (strain DSM 19637 / Miyazaki F) (Desulfovibrio vulgaris).